Consider the following 254-residue polypeptide: Isoprenyl transferase (254 aa).

The active site involves Asp-24. Residue Asp-24 participates in Mg(2+) binding. Substrate-binding positions include Gly-25–Arg-28, Trp-29, Arg-37, His-41, and Ser-69–Glu-71. Asn-72 (proton acceptor) is an active-site residue. Substrate-binding positions include Trp-73, Arg-75, Arg-192, and Arg-198–Ser-200. Glu-211 serves as a coordination point for Mg(2+).

It belongs to the UPP synthase family. Homodimer. It depends on Mg(2+) as a cofactor.

Functionally, catalyzes the condensation of isopentenyl diphosphate (IPP) with allylic pyrophosphates generating different type of terpenoids. The protein is Isoprenyl transferase of Bordetella parapertussis (strain 12822 / ATCC BAA-587 / NCTC 13253).